The following is a 184-amino-acid chain: ATP synthase subunit b, chloroplastic (184 aa).

A helical membrane pass occupies residues 27-49 (LATNPINLSVVLGVLIFFGKGVL).

This sequence belongs to the ATPase B chain family. As to quaternary structure, F-type ATPases have 2 components, F(1) - the catalytic core - and F(0) - the membrane proton channel. F(1) has five subunits: alpha(3), beta(3), gamma(1), delta(1), epsilon(1). F(0) has four main subunits: a(1), b(1), b'(1) and c(10-14). The alpha and beta chains form an alternating ring which encloses part of the gamma chain. F(1) is attached to F(0) by a central stalk formed by the gamma and epsilon chains, while a peripheral stalk is formed by the delta, b and b' chains.

The protein resides in the plastid. It localises to the chloroplast thylakoid membrane. Its function is as follows. F(1)F(0) ATP synthase produces ATP from ADP in the presence of a proton or sodium gradient. F-type ATPases consist of two structural domains, F(1) containing the extramembraneous catalytic core and F(0) containing the membrane proton channel, linked together by a central stalk and a peripheral stalk. During catalysis, ATP synthesis in the catalytic domain of F(1) is coupled via a rotary mechanism of the central stalk subunits to proton translocation. In terms of biological role, component of the F(0) channel, it forms part of the peripheral stalk, linking F(1) to F(0). This chain is ATP synthase subunit b, chloroplastic, found in Cuscuta exaltata (Tall dodder).